Here is a 364-residue protein sequence, read N- to C-terminus: UDP-N-acetylglucosamine--N-acetylmuramyl-(pentapeptide) pyrophosphoryl-undecaprenol N-acetylglucosamine transferase (364 aa).

Residues 10 to 12 (TGG), Asn128, Arg170, Ser199, Ile250, and Gln295 contribute to the UDP-N-acetyl-alpha-D-glucosamine site.

This sequence belongs to the glycosyltransferase 28 family. MurG subfamily.

The protein localises to the cell inner membrane. The enzyme catalyses di-trans,octa-cis-undecaprenyl diphospho-N-acetyl-alpha-D-muramoyl-L-alanyl-D-glutamyl-meso-2,6-diaminopimeloyl-D-alanyl-D-alanine + UDP-N-acetyl-alpha-D-glucosamine = di-trans,octa-cis-undecaprenyl diphospho-[N-acetyl-alpha-D-glucosaminyl-(1-&gt;4)]-N-acetyl-alpha-D-muramoyl-L-alanyl-D-glutamyl-meso-2,6-diaminopimeloyl-D-alanyl-D-alanine + UDP + H(+). It participates in cell wall biogenesis; peptidoglycan biosynthesis. In terms of biological role, cell wall formation. Catalyzes the transfer of a GlcNAc subunit on undecaprenyl-pyrophosphoryl-MurNAc-pentapeptide (lipid intermediate I) to form undecaprenyl-pyrophosphoryl-MurNAc-(pentapeptide)GlcNAc (lipid intermediate II). This chain is UDP-N-acetylglucosamine--N-acetylmuramyl-(pentapeptide) pyrophosphoryl-undecaprenol N-acetylglucosamine transferase, found in Chlorobium limicola (strain DSM 245 / NBRC 103803 / 6330).